The chain runs to 145 residues: Transcriptional regulator SlyA (145 aa).

The 134-residue stretch at 2-135 folds into the HTH marR-type domain; sequence ELPLGSDLAR…LALLVSRLEK (134 aa). Positions 49–72 form a DNA-binding region, H-T-H motif; sequence QIQLAKAIGIEQPSLVRTLDQLEE.

Belongs to the SlyA family. In terms of assembly, homodimer.

In terms of biological role, transcription regulator that can specifically activate or repress expression of target genes. Regulates genes involved in production of antibiotic and exoenzyme virulence determinants in the phytopathogen. Required for the expression of the virulence protein evf during Drosophila melanogaster infection. This is Transcriptional regulator SlyA from Pectobacterium carotovorum subsp. carotovorum (Erwinia carotovora subsp. carotovora).